The sequence spans 432 residues: Probable M18 family aminopeptidase 2 (432 aa).

Positions 86, 157, and 408 each coordinate Zn(2+).

This sequence belongs to the peptidase M18 family. Zn(2+) is required as a cofactor.

The sequence is that of Probable M18 family aminopeptidase 2 (apeB) from Streptomyces coelicolor (strain ATCC BAA-471 / A3(2) / M145).